We begin with the raw amino-acid sequence, 409 residues long: Fructose-1,6-bisphosphatase, chloroplastic (409 aa).

The N-terminal 49 residues, 1–49 (MAAATTTTSRPLLLSRQQAAASSLQCRLPRRPGSSLFAGQGQASTPNVR), are a transit peptide targeting the chloroplast. 5 residues coordinate Mg(2+): Glu-131, Glu-160, Asp-181, Leu-183, and Asp-184. 184–187 (DGSS) is a binding site for substrate. Cys-223 and Cys-228 are oxidised to a cystine. Substrate is bound by residues Asn-287, Tyr-319, Tyr-337, Tyr-339, and Lys-349. Glu-355 lines the Mg(2+) pocket.

This sequence belongs to the FBPase class 1 family. As to quaternary structure, homotetramer. The cofactor is Mg(2+). In photosynthetically active tissues, and in the shoot and root apical meristems.

It is found in the plastid. The protein resides in the chloroplast. It catalyses the reaction beta-D-fructose 1,6-bisphosphate + H2O = beta-D-fructose 6-phosphate + phosphate. The protein operates within carbohydrate biosynthesis; Calvin cycle. This is Fructose-1,6-bisphosphatase, chloroplastic (FBP) from Triticum aestivum (Wheat).